We begin with the raw amino-acid sequence, 57 residues long: COP9 signalosome complex subunit 9 (57 aa).

Position 26 is a phosphothreonine (Thr-26).

This sequence belongs to the CSN9 family. In terms of assembly, component of the CSN complex, composed of COPS1/GPS1, COPS2, COPS3, COPS4, COPS5, COPS6, COPS7 (COPS7A or COPS7B), COPS8 and COPS9. In the complex, it interacts directly with COPS3, COPS5 and COPS6.

It is found in the nucleus. The protein resides in the cytoplasm. The protein localises to the nucleoplasm. In terms of biological role, component of the COP9 signalosome complex (CSN), a complex involved in various cellular and developmental processes. The CSN complex is an essential regulator of the ubiquitin (Ubl) conjugation pathway by mediating the deneddylation of the cullin subunits of SCF-type E3 ligase complexes, leading to decrease the Ubl ligase activity of SCF-type complexes such as SCF, CSA or DDB2. The complex is also involved in phosphorylation of p53/TP53, c-jun/JUN, IkappaBalpha/NFKBIA, ITPK1 and IRF8/ICSBP, possibly via its association with CK2 and PKD kinases. CSN-dependent phosphorylation of TP53 and JUN promotes and protects degradation by the Ubl system, respectively. Plays a role in cell proliferation. The protein is COP9 signalosome complex subunit 9 of Bos taurus (Bovine).